Here is a 335-residue protein sequence, read N- to C-terminus: MFPTMLKIFPILATLAGHVHGVVVTVPEKTVNVKTGGNATLLCTYTSSQPLGNFFIQWSFYSAKESQLHTIYYYSEGQSYSYGEFKDRITAATSPGNASITISNMQPSDTGSYTCEVFSPQDDAGQSQKSVIVNVLVKPSKPFCKIEGTPEKGHLIYLLCKCDQGLPHPTYRWYKVDENTLTPVTEYFNPDTGILYIGNLTTFETGHYRCIASNIMGNSTCELDLTSMHSDGNIVAGALIGAILAAVIICAIVWVLTKKAKKKKSSSNEMQVMAQKQSNAEYAQVPNEENTPATAVLPSNATNEQPSADEAAAPETPENDEKHEVQKEETAGSSF.

The N-terminal stretch at methionine 1–glycine 21 is a signal peptide. Residues valine 22 to leucine 136 enclose the Ig-like V-type domain. At valine 22–asparagine 233 the chain is on the extracellular side. 2 disulfides stabilise this stretch: cysteine 43–cysteine 115 and cysteine 160–cysteine 210. Residues proline 139–threonine 226 enclose the Ig-like C2-type domain. A helical transmembrane segment spans residues isoleucine 234 to tryptophan 254. Residues valine 255–phenylalanine 335 are Cytoplasmic-facing. Residues serine 266–phenylalanine 335 are disordered. Over residues asparagine 268 to proline 306 the composition is skewed to polar residues. Residues asparagine 319 to phenylalanine 335 show a composition bias toward basic and acidic residues.

In terms of tissue distribution, expressed in thymocytes.

The protein resides in the membrane. The chain is V-set and immunoglobulin domain-containing protein 1 (VSIG1) from Gallus gallus (Chicken).